The sequence spans 282 residues: PAK4-inhibitor INKA1 (282 aa).

2 disordered regions span residues 21–50 (RDTG…QFRA) and 92–127 (GFSE…FSVS). 2 inka box regions span residues 163–200 (EAED…ELPE) and 256–282 (PADI…VSYL).

This sequence belongs to the INKA family. As to quaternary structure, interacts with PAK4. In terms of tissue distribution, expressed in tissues of the developing head during neurulation.

The protein localises to the nucleus. Its subcellular location is the cytoplasm. Its function is as follows. Inhibitor of the serine/threonine-protein kinase PAK4. Acts by binding PAK4 in a substrate-like manner, inhibiting the protein kinase activity. The protein is PAK4-inhibitor INKA1 of Mus musculus (Mouse).